Consider the following 574-residue polypeptide: Optineurin (574 aa).

The tract at residues 1 to 33 (MSHQPLSCLTEKGDSPTETTGNGPPTLAHPNLD) is disordered. Positions 38-170 (HELLQQMREL…VSELQLKLNS (133 aa)) form a coiled coil. Residues 58–209 (MKLNNQAMKG…GPIRTDSIDT (152 aa)) form an interaction with Rab8 region. The LIR signature appears at 176–181 (DSFVEI). Ser-177 carries the post-translational modification Phosphoserine; by TBK1. Ser-198 carries the post-translational modification Phosphoserine. Residues 233–496 (CLREGNQKVE…ALQLAVLLKD (264 aa)) are a coiled coil. Positions 262–286 (AKDRSETETQTEEHKEQEKEEEKSP) are enriched in basic and acidic residues. A disordered region spans residues 262–292 (AKDRSETETQTEEHKEQEKEEEKSPETVGSE). At Ser-336 the chain carries Phosphoserine. The segment at 405–574 (KRRESEKVDK…LLIHVTDCII (170 aa)) is interaction with HD. Residues 406–515 (RRESEKVDKV…RQSLMEMQSR (110 aa)) are interaction with MYO6. A UBAN motif is present at residues 468–473 (DFHAER). Ser-521 carries the post-translational modification Phosphoserine. The CCHC NOA-type zinc-finger motif lies at 544–574 (QQNIPIHSCPKCGEVLPDIDTLLIHVTDCII). 4 residues coordinate Zn(2+): Cys-552, Cys-555, His-568, and Cys-572.

As to quaternary structure, self-associates. Interacts with HD. Interacts with GTF3A. Interacts with MYO6. Interacts (via UBAN) with ubiquitinated TFRC. Interacts with GTP-bound Rab8 (RAB8A and/or RAB8B). Interacts with TBC1D17. Interacts with TBK1. Interacts with TRAF3. Binds to linear ubiquitin chains. Interacts with LC3 family members MAP1LC3A, MAP1LC3B, GABARAP, GABARAPL1 and GABARAPL2; OPTN phosphorylation increases the association (at least with MAP1LC3B). Interacts with RAB12; the interaction may be indirect. Interacts with TBK1; this interaction leads to the Golgi localization of TBK1 and its subsequent activation. Interacts with palmitoyltransferase ZDHHC17/HIP14; the interaction does not lead to palmitoylation of OPTN. Interacts with CYLD. Interacts with TOM1; the interaction is indirect and is mediated by MYO6, which acts as a bridge between TOM1 and OPTN. Interacts with USP12; the interaction is independent of USP12 deubiquitinase activity and may be involved in regulation of autophagic flux. Phosphorylated by TBK1, leading to restrict bacterial proliferation in case of infection. In terms of tissue distribution, present in aqueous humor of the eye (at protein level). Expressed in trabecular meshwork and astrocytes.

It localises to the cytoplasm. It is found in the perinuclear region. The protein resides in the golgi apparatus. Its subcellular location is the trans-Golgi network. The protein localises to the cytoplasmic vesicle. It localises to the autophagosome. It is found in the recycling endosome. Functionally, plays an important role in the maintenance of the Golgi complex, in membrane trafficking, in exocytosis, through its interaction with myosin VI and Rab8. Links myosin VI to the Golgi complex and plays an important role in Golgi ribbon formation. Negatively regulates the induction of IFNB in response to RNA virus infection. Plays a neuroprotective role in the eye and optic nerve. Probably part of the TNF-alpha signaling pathway that can shift the equilibrium toward induction of cell death. May act by regulating membrane trafficking and cellular morphogenesis via a complex that contains Rab8 and huntingtin (HD). Mediates the interaction of Rab8 with the probable GTPase-activating protein TBC1D17 during Rab8-mediated endocytic trafficking, such as that of transferrin receptor (TFRC/TfR); regulates Rab8 recruitment to tubules emanating from the endocytic recycling compartment. Autophagy receptor that interacts directly with both the cargo to become degraded and an autophagy modifier of the MAP1 LC3 family; targets ubiquitin-coated bacteria (xenophagy) and appears to function in the same pathway as SQSTM1 and CALCOCO2/NDP52. This chain is Optineurin (OPTN), found in Sus scrofa (Pig).